We begin with the raw amino-acid sequence, 219 residues long: Ribosomal RNA large subunit methyltransferase E (219 aa).

S-adenosyl-L-methionine-binding residues include glycine 60, tryptophan 62, aspartate 85, aspartate 101, and aspartate 126. Lysine 166 serves as the catalytic Proton acceptor.

This sequence belongs to the class I-like SAM-binding methyltransferase superfamily. RNA methyltransferase RlmE family.

The protein localises to the cytoplasm. It carries out the reaction uridine(2552) in 23S rRNA + S-adenosyl-L-methionine = 2'-O-methyluridine(2552) in 23S rRNA + S-adenosyl-L-homocysteine + H(+). Its function is as follows. Specifically methylates the uridine in position 2552 of 23S rRNA at the 2'-O position of the ribose in the fully assembled 50S ribosomal subunit. This Bordetella avium (strain 197N) protein is Ribosomal RNA large subunit methyltransferase E.